A 410-amino-acid polypeptide reads, in one-letter code: MKEEMIQRFTSYVKVDTQSDADKESCPSTEGQLNLARQLVEEMKSIGIQEVTMDENGYVMGTIPSNTDKDVPTIGFLAHIDTATDFTGKNVKPQLHENYQGGDITLNEDLHIVLSPTQFPNLQKYQGHTLITTDGTTLLGADNKAGIAEIMTAMHYLIEHPEIKHGKIRVAFTPDEEIGRGPHKFDVEAFGASYAYTIDGGPLGELQYESFNAAGAKVSIKGNNVHPGTAKDKMVSAAKIGMLFHNKLPSDESPEYTEGYEGFFHLTKFVGEVEEAELQYIIRDFDKDKFNDRKALFEKIASDLKAIYGENSINLKIQDQYYNMREKIEPVKHIVDIAHEAMENRSVTPVIEPIRGGTDGSQLSYKGLPTPNIFTGGENFHGKYEFISVENMVKATEVIVEIARLFEEKA.

His79 serves as a coordination point for Zn(2+). Asp81 is a catalytic residue. Residue Asp142 coordinates Zn(2+). Residue Glu176 is the Proton acceptor of the active site. Zn(2+) contacts are provided by Glu177, Asp199, and His381.

This sequence belongs to the peptidase M20B family. Zn(2+) is required as a cofactor.

It localises to the cytoplasm. The enzyme catalyses Release of the N-terminal residue from a tripeptide.. In terms of biological role, cleaves the N-terminal amino acid of tripeptides. The sequence is that of Peptidase T from Bacillus pumilus (strain SAFR-032).